Reading from the N-terminus, the 155-residue chain is WPP domain-containing protein 1 (155 aa).

Disordered stretches follow at residues 1-41 (MAET…VTIS) and 124-155 (SVKA…SSEA). Residues 7–39 (ESITTSSPPPISETENSTTLPTTETEKNPNPVT) are compositionally biased toward low complexity. The WPP stretch occupies residues 28–131 (TTETEKNPNP…LESVKAKSNV (104 aa)). A compositionally biased stretch (basic and acidic residues) spans 146-155 (VDSKIDSSEA).

As to quaternary structure, binds to FPP proteins. Interacts with WAP, WIP1, WIP2 and WIP3 through its WPP domain. Interacts with HSP70-1, HSP70-3 and WIT1. Component of a ternary complex composed of WPP1, HSP70-1 and WIT1. In terms of tissue distribution, expressed in roots, stems and leaves.

It localises to the nucleus envelope. The protein localises to the cytoplasm. Its subcellular location is the nucleus. It is found in the golgi apparatus. The protein resides in the nucleus matrix. Regulates the mitotic activity in roots. Plays a role with HSP70-1 in facilitating WIT1 nuclear envelope targeting. The protein is WPP domain-containing protein 1 (WPP1) of Arabidopsis thaliana (Mouse-ear cress).